We begin with the raw amino-acid sequence, 450 residues long: 3-phosphoshikimate 1-carboxyvinyltransferase (450 aa).

3-phosphoshikimate contacts are provided by K23, S24, and R28. K23 contacts phosphoenolpyruvate. Phosphoenolpyruvate contacts are provided by G96 and R124. S167, S168, Q169, S196, E311, and H340 together coordinate 3-phosphoshikimate. Q169 is a phosphoenolpyruvate binding site. E311 serves as the catalytic Proton acceptor. R344, R385, and K410 together coordinate phosphoenolpyruvate. The interval 426-450 (GQGWGYPQPRSGQRARRATGQGSGG) is disordered.

It belongs to the EPSP synthase family. In terms of assembly, monomer.

The protein localises to the cytoplasm. The catalysed reaction is 3-phosphoshikimate + phosphoenolpyruvate = 5-O-(1-carboxyvinyl)-3-phosphoshikimate + phosphate. It participates in metabolic intermediate biosynthesis; chorismate biosynthesis; chorismate from D-erythrose 4-phosphate and phosphoenolpyruvate: step 6/7. Functionally, catalyzes the transfer of the enolpyruvyl moiety of phosphoenolpyruvate (PEP) to the 5-hydroxyl of shikimate-3-phosphate (S3P) to produce enolpyruvyl shikimate-3-phosphate and inorganic phosphate. This Mycobacterium tuberculosis (strain ATCC 25177 / H37Ra) protein is 3-phosphoshikimate 1-carboxyvinyltransferase.